The chain runs to 737 residues: Glycogen [starch] synthase, muscle (737 aa).

Ser-8 is subject to Phosphoserine; by AMPK and PKA. Ser-11 carries the post-translational modification Phosphoserine. Lys-39 is a binding site for UDP. Residues His-205 and Arg-211 each coordinate UDP-alpha-D-glucose. Alpha-D-glucose 6-phosphate contacts are provided by His-291, Glu-292, Gln-294, His-297, and Lys-301. Arg-331 contributes to the UDP binding site. A UDP-alpha-D-glucose-binding site is contributed by Arg-331. At Ser-412 the chain carries Phosphoserine. His-501 is a binding site for alpha-D-glucose 6-phosphate. UDP-alpha-D-glucose is bound by residues Glu-510, Trp-512, and Gly-513. Residue Thr-515 coordinates UDP. 2 residues coordinate alpha-D-glucose 6-phosphate: Arg-582 and Arg-586. A disordered region spans residues Tyr-634–Asn-737. Ser-641 bears the Phosphoserine; by DYRK2, GSK3-alpha, GSK3-beta and PASK mark. Residues Ser-645 and Ser-649 each carry the phosphoserine; by GSK3-alpha and GSK3-beta modification. Position 652 is a phosphoserine (Ser-652). At Ser-653 the chain carries Phosphoserine; by GSK3-alpha and GSK3-beta. The residue at position 657 (Ser-657) is a Phosphoserine; by CK2. Residues Glu-658 to Ala-681 show a composition bias toward acidic residues. Residue Ser-672 is modified to Phosphoserine. Residues Ala-682–Arg-695 show a composition bias toward basic and acidic residues. Residue Ser-698 is modified to Phosphoserine. A compositionally biased stretch (polar residues) spans Ser-698–Ala-714. Thr-700 carries the post-translational modification Phosphothreonine. Ser-710 carries the phosphoserine modification. Positions Thr-715–Asn-737 are enriched in low complexity. Position 721 is a phosphothreonine (Thr-721). A phosphoserine mark is found at Ser-727 and Ser-731.

Belongs to the glycosyltransferase 3 family. As to quaternary structure, part of the GYS1-GYG1 complex, a heterooctamer composed of a tetramer of GYS1 and 2 dimers of GYG1, where each GYS1 protomer binds to one GYG1 subunit (via GYG1 C-terminus); the GYS1 tetramer may dissociate from GYG1 dimers to continue glycogen polymerization on its own. Post-translationally, phosphorylation at Ser-8 by AMPK inactivates the enzyme activity. Primed phosphorylation at Ser-657 (site 5) by CSNK2A1 and CSNK2A2 is required for inhibitory phosphorylation at Ser-641 (site 3a), Ser-645 (site 3b), Ser-649 (site 3c) and Ser-653 (site 4) by GSK3A an GSK3B. Phosphorylated at Ser-641 by PASK, leading to inactivation; phosphorylation by PASK is inhibited by glycogen. Phosphorylated at Ser-641 by DYRK2, leading to inactivation. Dephosphorylation at Ser-641 and Ser-645 by PP1 activates the enzyme.

The enzyme catalyses [(1-&gt;4)-alpha-D-glucosyl](n) + UDP-alpha-D-glucose = [(1-&gt;4)-alpha-D-glucosyl](n+1) + UDP + H(+). It functions in the pathway glycan biosynthesis; glycogen biosynthesis. With respect to regulation, allosteric activation by glucose-6-phosphate. Phosphorylation reduces the activity towards UDP-glucose. When in the non-phosphorylated state, glycogen synthase does not require glucose-6-phosphate as an allosteric activator; when phosphorylated it does. In terms of biological role, glycogen synthase participates in the glycogen biosynthetic process along with glycogenin and glycogen branching enzyme. Extends the primer composed of a few glucose units formed by glycogenin by adding new glucose units to it. In this context, glycogen synthase transfers the glycosyl residue from UDP-Glc to the non-reducing end of alpha-1,4-glucan. The sequence is that of Glycogen [starch] synthase, muscle (GYS1) from Macaca mulatta (Rhesus macaque).